Consider the following 346-residue polypeptide: Holliday junction branch migration complex subunit RuvB (346 aa).

A large ATPase domain (RuvB-L) region spans residues 1–181; it reads MSDRNPLIDA…FGIPTRLNFY (181 aa). ATP contacts are provided by residues L20, R21, G62, K65, T66, T67, 128–130, R171, Y181, and R218; that span reads EDF. Residue T66 coordinates Mg(2+). Residues 182–252 are small ATPAse domain (RuvB-S); sequence TVEELEYIVR…IADEALSRLE (71 aa). The head domain (RuvB-H) stretch occupies residues 255–346; the sequence is NRGLDQLDRR…SQYGLFMEDE (92 aa). DNA-binding residues include R291, R310, and R315.

This sequence belongs to the RuvB family. Homohexamer. Forms an RuvA(8)-RuvB(12)-Holliday junction (HJ) complex. HJ DNA is sandwiched between 2 RuvA tetramers; dsDNA enters through RuvA and exits via RuvB. An RuvB hexamer assembles on each DNA strand where it exits the tetramer. Each RuvB hexamer is contacted by two RuvA subunits (via domain III) on 2 adjacent RuvB subunits; this complex drives branch migration. In the full resolvosome a probable DNA-RuvA(4)-RuvB(12)-RuvC(2) complex forms which resolves the HJ.

Its subcellular location is the cytoplasm. It catalyses the reaction ATP + H2O = ADP + phosphate + H(+). Functionally, the RuvA-RuvB-RuvC complex processes Holliday junction (HJ) DNA during genetic recombination and DNA repair, while the RuvA-RuvB complex plays an important role in the rescue of blocked DNA replication forks via replication fork reversal (RFR). RuvA specifically binds to HJ cruciform DNA, conferring on it an open structure. The RuvB hexamer acts as an ATP-dependent pump, pulling dsDNA into and through the RuvAB complex. RuvB forms 2 homohexamers on either side of HJ DNA bound by 1 or 2 RuvA tetramers; 4 subunits per hexamer contact DNA at a time. Coordinated motions by a converter formed by DNA-disengaged RuvB subunits stimulates ATP hydrolysis and nucleotide exchange. Immobilization of the converter enables RuvB to convert the ATP-contained energy into a lever motion, pulling 2 nucleotides of DNA out of the RuvA tetramer per ATP hydrolyzed, thus driving DNA branch migration. The RuvB motors rotate together with the DNA substrate, which together with the progressing nucleotide cycle form the mechanistic basis for DNA recombination by continuous HJ branch migration. Branch migration allows RuvC to scan DNA until it finds its consensus sequence, where it cleaves and resolves cruciform DNA. This Brucella anthropi (strain ATCC 49188 / DSM 6882 / CCUG 24695 / JCM 21032 / LMG 3331 / NBRC 15819 / NCTC 12168 / Alc 37) (Ochrobactrum anthropi) protein is Holliday junction branch migration complex subunit RuvB.